Consider the following 102-residue polypeptide: MTYASSSSSSLSKAANALKPRIGLSATISLVSAGLLEEIFLLFGLTFKVSWAMVATGTVEVGVVSVSSSSSSPLPFFLASNVHQPSESVVTLGLLCLIFGLP.

The chain crosses the membrane as a helical span at residues 27 to 47; the sequence is TISLVSAGLLEEIFLLFGLTF.

The protein resides in the membrane. This is an uncharacterized protein from Saccharomyces cerevisiae (strain ATCC 204508 / S288c) (Baker's yeast).